The following is a 179-amino-acid chain: MSADSKNQKKVLFVCLGNICRSTMAEIVLRGLVHSRGILDDFQIDSAGTSSYHIGDTPDPRTVQSCNQNMGRAISEESLKHFKSIPLHRARQFTDEDFSKFDYIFAMDESNLSNIKKVLKHSTTKDNHIATIKRLGEYHTHKKINVEDPYYGDMSNFNICFNHVHDCLVNFLKEIESLN.

Catalysis depends on C15, which acts as the Nucleophile. Residue R21 is part of the active site. D148 functions as the Proton donor in the catalytic mechanism.

It belongs to the low molecular weight phosphotyrosine protein phosphatase family.

It is found in the cytoplasm. The catalysed reaction is O-phospho-L-tyrosyl-[protein] + H2O = L-tyrosyl-[protein] + phosphate. It carries out the reaction a phosphate monoester + H2O = an alcohol + phosphate. Its function is as follows. Acts on tyrosine phosphorylated proteins, low-MW aryl phosphates and natural and synthetic acyl phosphates. The protein is Low molecular weight phosphotyrosine protein phosphatase (acp1) of Dictyostelium discoideum (Social amoeba).